Here is a 340-residue protein sequence, read N- to C-terminus: GPALPP motifs-containing protein 1 (340 aa).

A disordered region spans residues methionine 1–aspartate 304. At alanine 2 the chain carries N-acetylalanine. The short motif at glycine 7–proline 12 is the GPALPP motif 1 element. Position 28 is a phosphoserine (serine 28). The GPALPP motif 2 signature appears at glycine 32–proline 37. A compositionally biased stretch (acidic residues) spans glycine 60 to serine 69. The GPALPP motif 3 motif lies at glycine 92–proline 97. Residue serine 105 is modified to Phosphoserine. Residues proline 107 to proline 116 are compositionally biased toward pro residues. The short motif at glycine 112–proline 117 is the GPALPP motif 4 element. Basic and acidic residues predominate over residues glutamine 124–proline 133. Threonine 138 is modified (phosphothreonine). Phosphoserine occurs at positions 140 and 141. 4 stretches are compositionally biased toward basic and acidic residues: residues glutamate 163 to valine 187, proline 227 to alanine 261, glutamate 269 to isoleucine 279, and lysine 287 to aspartate 304. Residue lysine 271 forms a Glycyl lysine isopeptide (Lys-Gly) (interchain with G-Cter in SUMO2) linkage. Lysine 308 participates in a covalent cross-link: Glycyl lysine isopeptide (Lys-Gly) (interchain with G-Cter in SUMO2).

This chain is GPALPP motifs-containing protein 1 (GPALPP1), found in Homo sapiens (Human).